The sequence spans 125 residues: Large-conductance mechanosensitive channel (125 aa).

Helical transmembrane passes span 15–35 and 67–87; these read MDLA…NSLV and GSFL…FFLI.

This sequence belongs to the MscL family. In terms of assembly, homopentamer.

Its subcellular location is the cell membrane. In terms of biological role, channel that opens in response to stretch forces in the membrane lipid bilayer. May participate in the regulation of osmotic pressure changes within the cell. The polypeptide is Large-conductance mechanosensitive channel (Lactobacillus gasseri (strain ATCC 33323 / DSM 20243 / BCRC 14619 / CIP 102991 / JCM 1131 / KCTC 3163 / NCIMB 11718 / NCTC 13722 / AM63)).